A 390-amino-acid chain; its full sequence is Protein NDRG4-A (390 aa).

The segment at 356–390 (LTSASSVDGSRPRPCTQSESSDGIGQINHTMEVSC) is disordered. The span at 370–390 (CTQSESSDGIGQINHTMEVSC) shows a compositional bias: polar residues.

This sequence belongs to the NDRG family.

The protein localises to the cytoplasm. It is found in the cytosol. Its function is as follows. Contributes to the maintenance of intracerebral BDNF levels within the normal range. May enhance growth factor-induced ERK1 and ERK2 phosphorylation. May attenuate growth factor-promoted ELK1 phosphorylation in a microtubule-dependent manner. The polypeptide is Protein NDRG4-A (ndrg4-a) (Xenopus laevis (African clawed frog)).